Here is a 256-residue protein sequence, read N- to C-terminus: Ribosomal RNA small subunit methyltransferase J (256 aa).

Residues 104 to 105 (RD), 120 to 121 (ER), 156 to 157 (SS), and Asp174 contribute to the S-adenosyl-L-methionine site.

Belongs to the methyltransferase superfamily. RsmJ family.

Its subcellular location is the cytoplasm. The catalysed reaction is guanosine(1516) in 16S rRNA + S-adenosyl-L-methionine = N(2)-methylguanosine(1516) in 16S rRNA + S-adenosyl-L-homocysteine + H(+). Functionally, specifically methylates the guanosine in position 1516 of 16S rRNA. The sequence is that of Ribosomal RNA small subunit methyltransferase J from Yersinia pseudotuberculosis serotype O:1b (strain IP 31758).